We begin with the raw amino-acid sequence, 211 residues long: UPF0056 membrane protein BUsg_257 (211 aa).

6 helical membrane passes run 14-34, 54-74, 76-96, 116-136, 144-164, and 185-205; these read FFVS…FTTM, AFII…AFGI, INSF…SMIS, VVPL…TIVW, SDFL…WLCF, and IMGL…IKSI.

It belongs to the UPF0056 (MarC) family.

The protein localises to the cell membrane. The chain is UPF0056 membrane protein BUsg_257 from Buchnera aphidicola subsp. Schizaphis graminum (strain Sg).